The sequence spans 261 residues: Gap junction beta-6 protein (261 aa).

Residues methionine 1–lysine 22 are Cytoplasmic-facing. A helical transmembrane segment spans residues valine 23 to glycine 45. Residues aspartate 46–arginine 75 lie on the Extracellular side of the membrane. A helical transmembrane segment spans residues leucine 76–tyrosine 98. Topologically, residues arginine 99–serine 131 are cytoplasmic. The helical transmembrane segment at leucine 132–phenylalanine 154 threads the bilayer. At tyrosine 155–threonine 192 the chain is on the extracellular side. The chain crosses the membrane as a helical span at residues isoleucine 193–leucine 215. Residues lysine 216–serine 261 lie on the Cytoplasmic side of the membrane.

This sequence belongs to the connexin family. Beta-type (group I) subfamily. As to quaternary structure, a connexon is composed of a hexamer of connexins. Interacts with CNST.

The protein localises to the cell membrane. The protein resides in the cell junction. It localises to the gap junction. Functionally, one gap junction consists of a cluster of closely packed pairs of transmembrane channels, the connexons, through which materials of low MW diffuse from one cell to a neighboring cell. The sequence is that of Gap junction beta-6 protein (GJB6) from Homo sapiens (Human).